The sequence spans 224 residues: Dehydration-responsive element-binding protein 1G (224 aa).

A compositionally biased stretch (polar residues) spans 1-16; sequence MDVSAALSSDYSSGTP. The disordered stretch occupies residues 1–46; it reads MDVSAALSSDYSSGTPSPVAADADDGSSAYMTVSSAPPKRRAGRTK. The AP2/ERF DNA-binding region spans 54–111; sequence VFKGVRRRNPGRWVCEVREPHGKQRIWLGTFETAEMAARAHDVAALALRGRAACLNFA. Disordered regions lie at residues 139–161 and 200–224; these read AFRP…SGAT and PPMA…LWSY.

The protein belongs to the AP2/ERF transcription factor family. ERF subfamily.

The protein resides in the nucleus. Functionally, transcriptional activator that binds specifically to the DNA sequence 5'-[AG]CCGAC-3'. Binding to the C-repeat/DRE element mediates high salinity- and dehydration-inducible transcription. The protein is Dehydration-responsive element-binding protein 1G (DREB1G) of Oryza sativa subsp. japonica (Rice).